Reading from the N-terminus, the 193-residue chain is V-type ATP synthase subunit E (193 aa).

The protein belongs to the V-ATPase E subunit family.

Its function is as follows. Produces ATP from ADP in the presence of a proton gradient across the membrane. The sequence is that of V-type ATP synthase subunit E from Anaeromyxobacter sp. (strain Fw109-5).